A 246-amino-acid polypeptide reads, in one-letter code: DNA-directed RNA polymerase subunit alpha (246 aa).

This sequence belongs to the RNA polymerase alpha chain family. As to quaternary structure, in plastids the minimal PEP RNA polymerase catalytic core is composed of four subunits: alpha, beta, beta', and beta''. When a (nuclear-encoded) sigma factor is associated with the core the holoenzyme is formed, which can initiate transcription (Potential).

Its subcellular location is the plastid. It carries out the reaction RNA(n) + a ribonucleoside 5'-triphosphate = RNA(n+1) + diphosphate. Functionally, DNA-dependent RNA polymerase catalyzes the transcription of DNA into RNA using the four ribonucleoside triphosphates as substrates. In Helicosporidium sp. subsp. Simulium jonesii (Green alga), this protein is DNA-directed RNA polymerase subunit alpha (rpoA).